The sequence spans 367 residues: Porin Omp2a (367 aa).

The N-terminal stretch at 1 to 22 is a signal peptide; the sequence is MNIKSLLLGSAAALVAASGAQA.

Belongs to the alphaproteobacteria porin family. In terms of assembly, monomer.

The protein localises to the cell outer membrane. Its function is as follows. Forms passive diffusion pores that allow small molecular weight hydrophilic materials across the outer membrane. This is Porin Omp2a (omp2a) from Brucella melitensis biotype 1 (strain ATCC 23456 / CCUG 17765 / NCTC 10094 / 16M).